The primary structure comprises 265 residues: Glutamate racemase 2 (265 aa).

Substrate is bound by residues 7 to 8 (DS) and 39 to 40 (YG). C70 (proton donor/acceptor) is an active-site residue. Substrate is bound at residue 71–72 (NT). Residue C182 is the Proton donor/acceptor of the active site. Substrate is bound at residue 183–184 (TH).

Belongs to the aspartate/glutamate racemases family.

The catalysed reaction is L-glutamate = D-glutamate. It functions in the pathway cell wall biogenesis; peptidoglycan biosynthesis. In terms of biological role, provides the (R)-glutamate required for cell wall biosynthesis. This Bacillus subtilis (strain 168) protein is Glutamate racemase 2 (yrpC).